The sequence spans 665 residues: Glycine--tRNA ligase beta subunit (665 aa).

Belongs to the class-II aminoacyl-tRNA synthetase family. In terms of assembly, tetramer of two alpha and two beta subunits.

It localises to the cytoplasm. It carries out the reaction tRNA(Gly) + glycine + ATP = glycyl-tRNA(Gly) + AMP + diphosphate. The chain is Glycine--tRNA ligase beta subunit (glyS) from Rickettsia prowazekii (strain Madrid E).